A 101-amino-acid chain; its full sequence is Small ribosomal subunit protein bS6 (101 aa).

Belongs to the bacterial ribosomal protein bS6 family.

In terms of biological role, binds together with bS18 to 16S ribosomal RNA. The sequence is that of Small ribosomal subunit protein bS6 from Staphylococcus saprophyticus subsp. saprophyticus (strain ATCC 15305 / DSM 20229 / NCIMB 8711 / NCTC 7292 / S-41).